The following is a 362-amino-acid chain: NAC domain-containing protein 5 (362 aa).

The NAC domain maps to 3-151; sequence NPVGFRFRPT…TYTLCKVKFK (149 aa). A DNA-binding region spans residues 107–157; that stretch reads IGEKRVLVFKNHGGSKSDWAMHEYHATFSSPNQIMTYTLCKVKFKGERREF. A disordered region spans residues 240 to 266; it reads DDRNNHTPQKPLTGVFSDHSTDGSDSD.

Its subcellular location is the nucleus. The chain is NAC domain-containing protein 5 (NAC005) from Arabidopsis thaliana (Mouse-ear cress).